We begin with the raw amino-acid sequence, 393 residues long: Na(+)/H(+) antiporter NhaA (393 aa).

A run of 11 helical transmembrane segments spans residues 18-38 (AGGV…NSPW), 65-85 (MLIW…GLEI), 101-121 (MLPA…YAAI), 131-151 (GWGI…VLLG), 160-180 (VFLT…IAFF), 184-204 (NLSP…LGLN), 210-230 (AVGP…KSGI), 260-280 (ALQP…NAGV), 298-318 (IAFG…WLLI), 334-354 (FFGV…IGSL), and 369-389 (IGVL…LLAS).

This sequence belongs to the NhaA Na(+)/H(+) (TC 2.A.33) antiporter family.

The protein localises to the cell inner membrane. The catalysed reaction is Na(+)(in) + 2 H(+)(out) = Na(+)(out) + 2 H(+)(in). In terms of biological role, na(+)/H(+) antiporter that extrudes sodium in exchange for external protons. In Albidiferax ferrireducens (strain ATCC BAA-621 / DSM 15236 / T118) (Rhodoferax ferrireducens), this protein is Na(+)/H(+) antiporter NhaA.